We begin with the raw amino-acid sequence, 34 residues long: Tau-theraphotoxin-Pc1c (34 aa).

3 disulfide bridges follow: Cys-2–Cys-16, Cys-9–Cys-21, and Cys-15–Cys-28. Residue Phe-34 is modified to Phenylalanine amide.

This sequence belongs to the neurotoxin 10 (Hwtx-1) family. 62 (Vatx) subfamily. Expressed by the venom gland.

It localises to the secreted. Functionally, selectively activates mammalian TRPV1, or capsaicin receptor, a non-selective cation channel expressed by sensory neurons of the pain pathway. Is more potent than VaTx1 and VaTx2. Interacts with distinct regions of the channel than capsaicin, since it only acts on the extracellular face of the channel, and capsaicin binds to the cytosolic side. Also activates avian TRPV1, which is insensitive to capsaicin. In mice, elicits pain-related behaviors, such as licking and flinching of the affected limb. The paw of toxin-injected mice shows substantial edema. This chain is Tau-theraphotoxin-Pc1c, found in Psalmopoeus cambridgei (Trinidad chevron tarantula).